Consider the following 396-residue polypeptide: Phosphoglycerate kinase (396 aa).

Substrate is bound by residues 21–23 (DFN), Arg-36, 59–62 (HLGK), Arg-119, and Arg-156. ATP is bound by residues Lys-206, Gly-294, Glu-325, and 352–355 (GGDS).

It belongs to the phosphoglycerate kinase family. In terms of assembly, monomer.

It localises to the cytoplasm. The enzyme catalyses (2R)-3-phosphoglycerate + ATP = (2R)-3-phospho-glyceroyl phosphate + ADP. It functions in the pathway carbohydrate degradation; glycolysis; pyruvate from D-glyceraldehyde 3-phosphate: step 2/5. The sequence is that of Phosphoglycerate kinase from Listeria welshimeri serovar 6b (strain ATCC 35897 / DSM 20650 / CCUG 15529 / CIP 8149 / NCTC 11857 / SLCC 5334 / V8).